A 218-amino-acid polypeptide reads, in one-letter code: Hypoxanthine-guanine phosphoribosyltransferase (218 aa).

The residue at position 2 (Ala2) is an N-acetylalanine. Lys69 serves as a coordination point for GMP. Lys103 is subject to N6-acetyllysine. Residue Lys115 forms a Glycyl lysine isopeptide (Lys-Gly) (interchain with G-Cter in SUMO1); alternate linkage. Lys115 participates in a covalent cross-link: Glycyl lysine isopeptide (Lys-Gly) (interchain with G-Cter in SUMO2); alternate. GMP contacts are provided by residues 134 to 142, Lys166, 186 to 188, and Asp194; these read EDIIDTGKT and KFV. Asp138 functions as the Proton acceptor in the catalytic mechanism. Position 142 is a phosphothreonine (Thr142). Asp194 contributes to the Mg(2+) binding site.

This sequence belongs to the purine/pyrimidine phosphoribosyltransferase family. Homotetramer. It depends on Mg(2+) as a cofactor.

It is found in the cytoplasm. The catalysed reaction is IMP + diphosphate = hypoxanthine + 5-phospho-alpha-D-ribose 1-diphosphate. It catalyses the reaction GMP + diphosphate = guanine + 5-phospho-alpha-D-ribose 1-diphosphate. The protein operates within purine metabolism; IMP biosynthesis via salvage pathway; IMP from hypoxanthine: step 1/1. Functionally, converts guanine to guanosine monophosphate, and hypoxanthine to inosine monophosphate. Transfers the 5-phosphoribosyl group from 5-phosphoribosylpyrophosphate onto the purine. Plays a central role in the generation of purine nucleotides through the purine salvage pathway. This is Hypoxanthine-guanine phosphoribosyltransferase (HPRT1) from Homo sapiens (Human).